The primary structure comprises 418 residues: Serine--tRNA ligase (418 aa).

An L-serine-binding site is contributed by 227–229 (TSE). ATP contacts are provided by residues 258–260 (RRE) and Val-274. Residue Glu-281 coordinates L-serine. An ATP-binding site is contributed by 345-348 (ELTS). Thr-380 provides a ligand contact to L-serine.

Belongs to the class-II aminoacyl-tRNA synthetase family. Type-1 seryl-tRNA synthetase subfamily. Homodimer. The tRNA molecule binds across the dimer.

It localises to the cytoplasm. It carries out the reaction tRNA(Ser) + L-serine + ATP = L-seryl-tRNA(Ser) + AMP + diphosphate + H(+). It catalyses the reaction tRNA(Sec) + L-serine + ATP = L-seryl-tRNA(Sec) + AMP + diphosphate + H(+). The protein operates within aminoacyl-tRNA biosynthesis; selenocysteinyl-tRNA(Sec) biosynthesis; L-seryl-tRNA(Sec) from L-serine and tRNA(Sec): step 1/1. Its function is as follows. Catalyzes the attachment of serine to tRNA(Ser). Is also able to aminoacylate tRNA(Sec) with serine, to form the misacylated tRNA L-seryl-tRNA(Sec), which will be further converted into selenocysteinyl-tRNA(Sec). This chain is Serine--tRNA ligase, found in Rhodococcus jostii (strain RHA1).